The sequence spans 156 residues: Small ribosomal subunit protein uS7 (156 aa).

The protein belongs to the universal ribosomal protein uS7 family. In terms of assembly, part of the 30S ribosomal subunit. Contacts proteins S9 and S11.

Its function is as follows. One of the primary rRNA binding proteins, it binds directly to 16S rRNA where it nucleates assembly of the head domain of the 30S subunit. Is located at the subunit interface close to the decoding center, probably blocks exit of the E-site tRNA. The polypeptide is Small ribosomal subunit protein uS7 (Leptothrix cholodnii (strain ATCC 51168 / LMG 8142 / SP-6) (Leptothrix discophora (strain SP-6))).